Consider the following 180-residue polypeptide: Crossover junction endodeoxyribonuclease RuvC (180 aa).

Active-site residues include D7, E66, and D138. Positions 7, 66, and 138 each coordinate Mg(2+).

Belongs to the RuvC family. Homodimer which binds Holliday junction (HJ) DNA. The HJ becomes 2-fold symmetrical on binding to RuvC with unstacked arms; it has a different conformation from HJ DNA in complex with RuvA. In the full resolvosome a probable DNA-RuvA(4)-RuvB(12)-RuvC(2) complex forms which resolves the HJ. Mg(2+) is required as a cofactor.

The protein resides in the cytoplasm. The catalysed reaction is Endonucleolytic cleavage at a junction such as a reciprocal single-stranded crossover between two homologous DNA duplexes (Holliday junction).. In terms of biological role, the RuvA-RuvB-RuvC complex processes Holliday junction (HJ) DNA during genetic recombination and DNA repair. Endonuclease that resolves HJ intermediates. Cleaves cruciform DNA by making single-stranded nicks across the HJ at symmetrical positions within the homologous arms, yielding a 5'-phosphate and a 3'-hydroxyl group; requires a central core of homology in the junction. The consensus cleavage sequence is 5'-(A/T)TT(C/G)-3'. Cleavage occurs on the 3'-side of the TT dinucleotide at the point of strand exchange. HJ branch migration catalyzed by RuvA-RuvB allows RuvC to scan DNA until it finds its consensus sequence, where it cleaves and resolves the cruciform DNA. The sequence is that of Crossover junction endodeoxyribonuclease RuvC from Paraburkholderia phytofirmans (strain DSM 17436 / LMG 22146 / PsJN) (Burkholderia phytofirmans).